The sequence spans 185 residues: ATP synthase subunit b (185 aa).

The helical transmembrane segment at 27 to 47 (GALIWKGLNILAFLGIVYYFG) threads the bilayer.

The protein belongs to the ATPase B chain family. In terms of assembly, F-type ATPases have 2 components, F(1) - the catalytic core - and F(0) - the membrane proton channel. F(1) has five subunits: alpha(3), beta(3), gamma(1), delta(1), epsilon(1). F(0) has three main subunits: a(1), b(2) and c(10-14). The alpha and beta chains form an alternating ring which encloses part of the gamma chain. F(1) is attached to F(0) by a central stalk formed by the gamma and epsilon chains, while a peripheral stalk is formed by the delta and b chains.

It is found in the cell inner membrane. F(1)F(0) ATP synthase produces ATP from ADP in the presence of a proton or sodium gradient. F-type ATPases consist of two structural domains, F(1) containing the extramembraneous catalytic core and F(0) containing the membrane proton channel, linked together by a central stalk and a peripheral stalk. During catalysis, ATP synthesis in the catalytic domain of F(1) is coupled via a rotary mechanism of the central stalk subunits to proton translocation. In terms of biological role, component of the F(0) channel, it forms part of the peripheral stalk, linking F(1) to F(0). The sequence is that of ATP synthase subunit b from Aquifex aeolicus (strain VF5).